A 204-amino-acid chain; its full sequence is Inactive ribonuclease-like protein 9 (204 aa).

Positions 1–26 (MMRTLITTHPLLLLLLLQQLLQPVQL) are cleaved as a signal peptide. Cystine bridges form between Cys97/Cys152, Cys115/Cys167, and Cys122/Cys129. N-linked (GlcNAc...) asparagine glycans are attached at residues Asn130 and Asn142.

It belongs to the pancreatic ribonuclease family.

The protein localises to the secreted. Its function is as follows. Does not exhibit any ribonuclease activity. In Chlorocebus aethiops (Green monkey), this protein is Inactive ribonuclease-like protein 9 (RNASE9).